We begin with the raw amino-acid sequence, 501 residues long: Cytochrome P450 4c21 (501 aa).

Heme contacts are provided by Glu-309 and Cys-447.

The protein belongs to the cytochrome P450 family. The cofactor is heme.

It localises to the endoplasmic reticulum membrane. The protein resides in the microsome membrane. The catalysed reaction is an organic molecule + reduced [NADPH--hemoprotein reductase] + O2 = an alcohol + oxidized [NADPH--hemoprotein reductase] + H2O + H(+). The protein is Cytochrome P450 4c21 (CYP4C21) of Blattella germanica (German cockroach).